The sequence spans 134 residues: Transcription antitermination protein NusB (134 aa).

Belongs to the NusB family.

Functionally, involved in transcription antitermination. Required for transcription of ribosomal RNA (rRNA) genes. Binds specifically to the boxA antiterminator sequence of the ribosomal RNA (rrn) operons. The polypeptide is Transcription antitermination protein NusB (Shewanella amazonensis (strain ATCC BAA-1098 / SB2B)).